Consider the following 360-residue polypeptide: Meiosis-inducing protein 1 (360 aa).

Residues 102–135 (SKETKTTKDCTMATGPERGKKSSESTRSSSLSSL) are disordered. Residues 126–135 (STRSSSLSSL) are compositionally biased toward low complexity.

In terms of assembly, interacts with UME6.

Its subcellular location is the nucleus. Its function is as follows. Transcription factor required for sporulation and for early sporulation-specific genes expression. Positive regulator of SME1/IME2 expression. Directly activates expression of SLZ1 during meiosis. The chain is Meiosis-inducing protein 1 (IME1) from Saccharomyces cerevisiae (strain ATCC 204508 / S288c) (Baker's yeast).